Consider the following 644-residue polypeptide: Anti-sigma-I factor RsgI3 (644 aa).

Topologically, residues 1–56 are cytoplasmic; it reads MDNIGVIIKIEGNEAIVMTDDCSFKKVPIKDGMHPGQKILVPNNEVIQKENKSIKR. Residues 3–50 enclose the RsgI N-terminal anti-sigma domain; that stretch reads NIGVIIKIEGNEAIVMTDDCSFKKVPIKDGMHPGQKILVPNNEVIQKE. Residues 57–77 form a helical membrane-spanning segment; that stretch reads ISAVATGIAAVFLMVLSLIWI. Topologically, residues 78 to 644 are extracellular; the sequence is NKPGRPDGIY…VVPSKNLFAD (567 aa). Residues 302 to 328 are compositionally biased toward polar residues; it reads PTNTPSISTKPSATPAENPTPKLTQKP. The segment at 302–359 is disordered; sequence PTNTPSISTKPSATPAENPTPKLTQKPTPVPAKTGERTSTTPTPTPAPTVRNGTGSGL. 2 PA14 domains span residues 354–491 and 502–640; these read GTGS…PSSQ and KDVN…PSKN.

In terms of assembly, interacts (via RsgI N-terminal anti-sigma domain) with SigI3.

Its subcellular location is the cell membrane. Its function is as follows. Anti-sigma factor for SigI3. Negatively regulates SigI3 activity through direct interaction. Binding of the polysaccharide substrate to the extracellular C-terminal sensing domain of RsgI3 may induce a conformational change in its N-terminal cytoplasmic region, leading to the release and activation of SigI3. The polypeptide is Anti-sigma-I factor RsgI3 (Acetivibrio thermocellus (strain ATCC 27405 / DSM 1237 / JCM 9322 / NBRC 103400 / NCIMB 10682 / NRRL B-4536 / VPI 7372) (Clostridium thermocellum)).